Consider the following 496-residue polypeptide: Bifunctional protein HldE (496 aa).

The segment at 1–335 (MIKHNPPSPE…GALFRSHGPT (335 aa)) is ribokinase. 211–214 (NRKE) is a binding site for ATP. Residue Asp280 is part of the active site. Residues 363–496 (FTNGCFDILH…IGKLRAGSTS (134 aa)) form a cytidylyltransferase region.

This sequence in the N-terminal section; belongs to the carbohydrate kinase PfkB family. It in the C-terminal section; belongs to the cytidylyltransferase family. As to quaternary structure, homodimer.

The enzyme catalyses D-glycero-beta-D-manno-heptose 7-phosphate + ATP = D-glycero-beta-D-manno-heptose 1,7-bisphosphate + ADP + H(+). The catalysed reaction is D-glycero-beta-D-manno-heptose 1-phosphate + ATP + H(+) = ADP-D-glycero-beta-D-manno-heptose + diphosphate. The protein operates within nucleotide-sugar biosynthesis; ADP-L-glycero-beta-D-manno-heptose biosynthesis; ADP-L-glycero-beta-D-manno-heptose from D-glycero-beta-D-manno-heptose 7-phosphate: step 1/4. It functions in the pathway nucleotide-sugar biosynthesis; ADP-L-glycero-beta-D-manno-heptose biosynthesis; ADP-L-glycero-beta-D-manno-heptose from D-glycero-beta-D-manno-heptose 7-phosphate: step 3/4. Its function is as follows. Catalyzes the phosphorylation of D-glycero-D-manno-heptose 7-phosphate at the C-1 position to selectively form D-glycero-beta-D-manno-heptose-1,7-bisphosphate. In terms of biological role, catalyzes the ADP transfer from ATP to D-glycero-beta-D-manno-heptose 1-phosphate, yielding ADP-D-glycero-beta-D-manno-heptose. This Mesorhizobium japonicum (strain LMG 29417 / CECT 9101 / MAFF 303099) (Mesorhizobium loti (strain MAFF 303099)) protein is Bifunctional protein HldE.